A 255-amino-acid polypeptide reads, in one-letter code: MIDVFPVRAFKDNYIWIVHNQQFALIIDPGDATPVLAWISQQNLQPIAILCTHHHHDHTGGIPSLVQEFAIPVYGPANEKIPGMTHPLTGGDTLSFPELSLEFSVLDIPGHTAGHIAYYGQNYLFCGDTLFACGCGRIFEGSAQQMLASLQKLASLPDETLVYCAHEYTLANVRFARVLDPDNPDLIKLESTVEEKLKQNIPTLPSSLAVEKATNPFLRCDQPAIIHSASQHVGRHLNDPVSVFAAIRDWKNNFQ.

Positions 53, 55, 57, 58, 111, 128, and 166 each coordinate Zn(2+).

It belongs to the metallo-beta-lactamase superfamily. Glyoxalase II family. In terms of assembly, monomer. Requires Zn(2+) as cofactor.

It carries out the reaction an S-(2-hydroxyacyl)glutathione + H2O = a 2-hydroxy carboxylate + glutathione + H(+). It functions in the pathway secondary metabolite metabolism; methylglyoxal degradation; (R)-lactate from methylglyoxal: step 2/2. Its function is as follows. Thiolesterase that catalyzes the hydrolysis of S-D-lactoyl-glutathione to form glutathione and D-lactic acid. The protein is Hydroxyacylglutathione hydrolase of Nitrosomonas eutropha (strain DSM 101675 / C91 / Nm57).